The following is a 471-amino-acid chain: MKIKTRFAPSPTGYLHVGGARTALYSWLFARHQDGEFVLRIEDTDLERSTQDAIDAIMDGMNWLSLNWDEGPYYQTKRFDRYNAVIDQMLENGTAYKCYCSKERLEALREQQMEKGDKPRYDGHCRGSHEHHADNEPHVVRFLNPQEGSVIFNDRIRGPIEFSNQELDDLIIRRTDGSPTYNFCVVIDDWDMEITHVIRGEDHINNTPRQINILKALGAPVPEYAHVSMILGDDGKKLSKRHGAVGVMQYRDDGYLPEALLNYLVRLGWSSGDQEIFSIDEMKSLFSLDAVNKSASAFNTEKLQWLNHHYINHLPAEYVATHLSWHIEQAGLDTRTGPQLSELVGLLGERCKTLKEMADSCRYFYEDFAEFDADAAKKHLRPVARQPLELVREKLAAITSWTAENIHHAIQGTADELGQGMGKVGMPLRVAVTGAGQSPGVDVTVHAIGQQRSLARIDKALAFIAERETQQ.

Residues 9–19 (PSPTGYLHVGG) carry the 'HIGH' region motif. Positions 237 to 241 (KLSKR) match the 'KMSKS' region motif. Lysine 240 serves as a coordination point for ATP.

Belongs to the class-I aminoacyl-tRNA synthetase family. Glutamate--tRNA ligase type 1 subfamily. As to quaternary structure, monomer.

It localises to the cytoplasm. It catalyses the reaction tRNA(Glu) + L-glutamate + ATP = L-glutamyl-tRNA(Glu) + AMP + diphosphate. In terms of biological role, catalyzes the attachment of glutamate to tRNA(Glu) in a two-step reaction: glutamate is first activated by ATP to form Glu-AMP and then transferred to the acceptor end of tRNA(Glu). In Pectobacterium atrosepticum (strain SCRI 1043 / ATCC BAA-672) (Erwinia carotovora subsp. atroseptica), this protein is Glutamate--tRNA ligase.